The primary structure comprises 61 residues: Large ribosomal subunit protein bL32 (61 aa).

The protein belongs to the bacterial ribosomal protein bL32 family.

The polypeptide is Large ribosomal subunit protein bL32 (Cytophaga hutchinsonii (strain ATCC 33406 / DSM 1761 / CIP 103989 / NBRC 15051 / NCIMB 9469 / D465)).